Reading from the N-terminus, the 321-residue chain is Glucokinase (321 aa).

8-13 lines the ATP pocket; that stretch reads GDVGGT.

This sequence belongs to the bacterial glucokinase family.

The protein resides in the cytoplasm. It carries out the reaction D-glucose + ATP = D-glucose 6-phosphate + ADP + H(+). The sequence is that of Glucokinase from Salmonella typhi.